A 170-amino-acid polypeptide reads, in one-letter code: Peptide methionine sulfoxide reductase MsrA (170 aa).

Cys14 is a catalytic residue.

It belongs to the MsrA Met sulfoxide reductase family.

It carries out the reaction L-methionyl-[protein] + [thioredoxin]-disulfide + H2O = L-methionyl-(S)-S-oxide-[protein] + [thioredoxin]-dithiol. The enzyme catalyses [thioredoxin]-disulfide + L-methionine + H2O = L-methionine (S)-S-oxide + [thioredoxin]-dithiol. Functionally, has an important function as a repair enzyme for proteins that have been inactivated by oxidation. Catalyzes the reversible oxidation-reduction of methionine sulfoxide in proteins to methionine. The polypeptide is Peptide methionine sulfoxide reductase MsrA (Streptomyces avermitilis (strain ATCC 31267 / DSM 46492 / JCM 5070 / NBRC 14893 / NCIMB 12804 / NRRL 8165 / MA-4680)).